The following is a 470-amino-acid chain: Ribulose bisphosphate carboxylase large chain (470 aa).

Lys-5 is modified (N6,N6,N6-trimethyllysine). Asn-114 and Thr-164 together coordinate substrate. Lys-166 serves as the catalytic Proton acceptor. Lys-168 contacts substrate. 3 residues coordinate Mg(2+): Lys-192, Asp-194, and Glu-195. The residue at position 192 (Lys-192) is an N6-carboxylysine. His-285 serves as the catalytic Proton acceptor. Residues Arg-286, His-318, and Ser-370 each coordinate substrate.

Belongs to the RuBisCO large chain family. Type I subfamily. Heterohexadecamer of 8 large chains and 8 small chains; disulfide-linked. The disulfide link is formed within the large subunit homodimers. Mg(2+) serves as cofactor. Post-translationally, the disulfide bond which can form in the large chain dimeric partners within the hexadecamer appears to be associated with oxidative stress and protein turnover.

Its subcellular location is the plastid. The protein resides in the chloroplast. The enzyme catalyses 2 (2R)-3-phosphoglycerate + 2 H(+) = D-ribulose 1,5-bisphosphate + CO2 + H2O. It carries out the reaction D-ribulose 1,5-bisphosphate + O2 = 2-phosphoglycolate + (2R)-3-phosphoglycerate + 2 H(+). Functionally, ruBisCO catalyzes two reactions: the carboxylation of D-ribulose 1,5-bisphosphate, the primary event in carbon dioxide fixation, as well as the oxidative fragmentation of the pentose substrate in the photorespiration process. Both reactions occur simultaneously and in competition at the same active site. The chain is Ribulose bisphosphate carboxylase large chain from Bertiera breviflora.